Here is an 844-residue protein sequence, read N- to C-terminus: RPA-related protein RADX (844 aa).

The segment at residues 228-331 is a DNA-binding region (OB); it reads WHNRKNFPAL…LISTMEICLN (104 aa). 2 disordered regions span residues 571 to 609 and 626 to 664; these read PASETLQNASPPSTSQAAAKEGHYHERGSKRSQDDRPMD and GPTANPVPVPQPHSSAQMKGNKPNIPSRENSTANATGKS. Residues 572-587 show a composition bias toward polar residues; it reads ASETLQNASPPSTSQA. The span at 590–608 shows a compositional bias: basic and acidic residues; sequence KEGHYHERGSKRSQDDRPM. Polar residues predominate over residues 652 to 662; sequence SRENSTANATG.

It localises to the chromosome. Functionally, single-stranded DNA-binding protein recruited to replication forks to maintain genome stability. Prevents fork collapse by antagonizing the accumulation of RAD51 at forks to ensure the proper balance of fork remodeling and protection without interfering with the capacity of cells to complete homologous recombination of double-strand breaks. This is RPA-related protein RADX from Rattus norvegicus (Rat).